Consider the following 623-residue polypeptide: Heterogeneous nuclear ribonucleoprotein L (623 aa).

The span at 1–16 (MSRRLLPRAEKRRRRL) shows a compositional bias: basic residues. A disordered region spans residues 1 to 97 (MSRRLLPRAE…NYDDPHKTPA (97 aa)). Residues 17-27 (EQRQQPDEQLR) show a composition bias toward basic and acidic residues. Residues 28 to 37 (RAGAMVKMAA) are compositionally biased toward low complexity. A compositionally biased stretch (gly residues) spans 38–54 (AGGGGGGGRYYGGGNEG). Residues K59 and K62 each participate in a glycyl lysine isopeptide (Lys-Gly) (interchain with G-Cter in SUMO2) cross-link. The segment covering 69–87 (QHGGGGGGGSGAAGGGGGE) has biased composition (gly residues). The residue at position 98 (S98) is a Phosphoserine. An RRM 1 domain is found at 99 to 173 (PVVHIRGLID…HPAFVNYSTS (75 aa)). K133 participates in a covalent cross-link: Glycyl lysine isopeptide (Lys-Gly) (interchain with G-Cter in SUMO2). At S182 the chain carries Phosphoserine. An RRM 2 domain is found at 190 to 267 (SVLLFTILNP…CTLKIEYAKP (78 aa)). Residue K266 is modified to N6-acetyllysine. Positions 281 to 298 (DYTNPNLSGQGDPGSNPN) are enriched in polar residues. Positions 281–413 (DYTNPNLSGQ…PPPPDYGPHA (133 aa)) are disordered. Residues S288 and S295 each carry the phosphoserine modification. Residue K299 forms a Glycyl lysine isopeptide (Lys-Gly) (interchain with G-Cter in SUMO2) linkage. R388 and R392 each carry asymmetric dimethylarginine. Pro residues predominate over residues 398-409 (GHPPPPPPPPDY). S415 bears the Phosphoserine mark. 2 consecutive RRM domains span residues 416 to 490 (PVLM…VSKQ) and 498 to 586 (SYGL…WDSK). S578 is modified (phosphoserine; by CaMK4). K602 is covalently cross-linked (Glycyl lysine isopeptide (Lys-Gly) (interchain with G-Cter in SUMO2)).

As to quaternary structure, identified in a IGF2BP1-dependent mRNP granule complex containing untranslated mRNAs. Interacts with HNRNPLL. Interacts with APEX1; the interaction is DNA-dependent. Component of a complex with SETD2. Interacts with ELAVL1. Part of a transcription inhibitory ribonucleoprotein complex composed at least of the circular RNA circZNF827, ZNF827 and HNRNPK. Interacts with CHD8 in an RNA-dependent manner. Several isoelectric forms of the L protein are probably the results of post-translational modifications. In terms of processing, phosphorylation at Ser-578 by CaMK4 enhances interaction with a CaMK4-responsive RNA element (CaRRE1), and prevents inclusion of the stress axis-regulated exon (STREX) of the KCNMA1 potassium channel transcripts upon membrane depolarization.

Its subcellular location is the nucleus. It localises to the nucleoplasm. The protein resides in the cytoplasm. Splicing factor binding to exonic or intronic sites and acting as either an activator or repressor of exon inclusion. Exhibits a binding preference for CA-rich elements. Component of the heterogeneous nuclear ribonucleoprotein (hnRNP) complexes and associated with most nascent transcripts. Associates, together with APEX1, to the negative calcium responsive element (nCaRE) B2 of the APEX2 promoter. As part of a ribonucleoprotein complex composed at least of ZNF827, HNRNPK and the circular RNA circZNF827 that nucleates the complex on chromatin, may negatively regulate the transcription of genes involved in neuronal differentiation. Regulates alternative splicing of a core group of genes involved in neuronal differentiation, likely by mediating H3K36me3-coupled transcription elongation and co-transcriptional RNA processing via interaction with CHD8. The protein is Heterogeneous nuclear ribonucleoprotein L of Rattus norvegicus (Rat).